The chain runs to 1021 residues: Solute carrier family 12 member 3 (1021 aa).

Over 1–137 (MAELPTTETP…KNPEEPVRFG (137 aa)) the chain is Cytoplasmic. Ser-43 bears the Phosphoserine mark. Residue Thr-46 is modified to Phosphothreonine; by OXSR1 and STK39. Ser-49 is subject to Phosphoserine. The residue at position 50 (Thr-50) is a Phosphothreonine. Residues Thr-55 and Thr-60 each carry the phosphothreonine; by OXSR1 and STK39 modification. At Ser-73 the chain carries Phosphoserine. Phosphoserine; by OXSR1 and STK39 is present on Ser-91. The residue at position 124 (Thr-124) is a Phosphothreonine. Phosphoserine is present on Ser-126. The discontinuously helical transmembrane segment at 138-167 (WVKGVMIRCMLNIWGVILYLRLPWITAQAG) threads the bilayer. Leu-148 serves as a coordination point for Na(+). Residue Asn-149 participates in polythiazide binding. Trp-151 serves as a coordination point for Na(+). The chain crosses the membrane as a helical span at residues 168 to 189 (IVLTWIIILLSVTVTSITGLSI). The Cytoplasmic segment spans residues 190–220 (SAISTNGKVKSGGTYFLISRSLGPELGGSIG). A helical membrane pass occupies residues 221–243 (LIFAFANAVGVAMHTVGFAETVR). Polythiazide-binding residues include Asn-227 and His-234. The Extracellular portion of the chain corresponds to 244–255 (DLLQEYGAPIVD). 2 helical membrane passes run 256-280 (PINDIRIIAVVSVTVLLAISLAGME) and 281-303 (WESKAQVLFFLVIMVSFANYLVG). Topologically, residues 304–338 (TLIPPSEDKASKGFFSYRADIFVQNLVPDWRGPDG) are extracellular. A discontinuously helical membrane pass occupies residues 339-360 (TFFGMFSIFFPSATGILAGANI). Thr-352 provides a ligand contact to polythiazide. Positions 353, 354, and 355 each coordinate chloride. Asn-359 contacts polythiazide. Residues 361-371 (SGDLKDPAIAI) are Cytoplasmic-facing. The chain crosses the membrane as a helical span at residues 372-393 (PKGTLMAIFWTTISYLAISATI). Residues 394–453 (GSCVVRDASGVLNDTVTPGWGACEGLACSYGWNFTECTQQHSCHYGLINYYQTMSMVSGF) are Extracellular-facing. An N-linked (GlcNAc...) asparagine glycan is attached at Asn-406. A disulfide bond links Cys-416 and Cys-421. Asn-426 carries N-linked (GlcNAc...) asparagine glycosylation. Cys-430 and Cys-436 are disulfide-bonded. A helical membrane pass occupies residues 454-477 (APLITAGIFGATLSSALACLVSAA). 3 residues coordinate Na(+): Ala-464, Ser-467, and Ser-468. Residues 478 to 507 (KVFQCLCEDQLYPLIGFFGKGYGKNKEPVR) lie on the Cytoplasmic side of the membrane. A helical membrane pass occupies residues 508–522 (GYLLAYAIAVAFIII). The Extracellular segment spans residues 523 to 527 (AELNT). A helical transmembrane segment spans residues 528–544 (IAPIISNFFLCSYALIN). A chloride-binding site is contributed by Tyr-540. Topologically, residues 545–567 (FSCFHASITNSPGWRPSFQYYNK) are cytoplasmic. The next 2 helical transmembrane spans lie at 568-587 (WAALFGAIISVVIMFLLTWW) and 588-599 (AALIAIGVVLFL). Topologically, residues 600-1021 (LLYVIYKKPE…QENVLTFYCQ (422 aa)) are cytoplasmic. The tract at residues 615 to 630 (SVQAGSYNLALSYSVG) is scissor helix. 6 residues coordinate ATP: Leu-648, Arg-655, Val-677, Gly-741, Leu-780, and Asn-781.

This sequence belongs to the SLC12A transporter family. In terms of assembly, homodimer; adopts a domain-swap conformation at the scissor helices connecting the transmembrane domain and C-terminal domain. Interacts with KLHL3. Interacts with IL18R1; this interaction is increased by IL18 treatment. Post-translationally, ubiquitinated; ubiquitination is essential for regulation of endocytosis. The BCR(KLHL3) complex was initially identified as a candidate ubiquitin ligase for SLC12A3. However, it was later shown that it is not the case. Phosphorylated at Thr-46, Thr-55, Thr-60 and Ser-91 by OXSR1/OSR1 and STK39/SPAK downstream of WNK4, promoting its activity. Phosphorylated in response to IL18. As to expression, predominantly expressed in the kidney (at protein level). Localizes to the distal convoluted tubules (at protein level). Not detected in normal aorta, but abundantly expressed in fatty streaks and advanced atherosclerotic lesions (at protein level).

It is found in the cell membrane. The protein localises to the apical cell membrane. The enzyme catalyses chloride(out) + Na(+)(out) = chloride(in) + Na(+)(in). With respect to regulation, phosphorylation by OXSR1/OSR1 and STK39/SPAK in kidney distal convoluted tubules downstream of WNK4 promotes its activity. Also activated by OXSR1/OSR1 and STK39/SPAK downstream of WNK3. Target of thiazide diuretics used in the treatment of high blood pressure. Thiazide drugs, such as polythiazide, specifically inhibit SLC12A3/NCC transporter activity by competing with chloride for binding and by locking SLC12A3/NCC in an outward-facing conformation. Its function is as follows. Electroneutral sodium and chloride ion cotransporter, which acts as a key mediator of sodium and chloride reabsorption in kidney distal convoluted tubules. Also acts as a receptor for the pro-inflammatory cytokine IL18, thereby contributing to IL18-induced cytokine production, including IFNG, IL6, IL18 and CCL2. May act either independently of IL18R1, or in a complex with IL18R1. The protein is Solute carrier family 12 member 3 of Homo sapiens (Human).